A 312-amino-acid polypeptide reads, in one-letter code: Ribosomal protein L11 methyltransferase (312 aa).

Residues Thr160, Gly181, Asp203, and Asn246 each coordinate S-adenosyl-L-methionine.

Belongs to the methyltransferase superfamily. PrmA family.

The protein localises to the cytoplasm. The enzyme catalyses L-lysyl-[protein] + 3 S-adenosyl-L-methionine = N(6),N(6),N(6)-trimethyl-L-lysyl-[protein] + 3 S-adenosyl-L-homocysteine + 3 H(+). Methylates ribosomal protein L11. This Staphylococcus aureus (strain USA300) protein is Ribosomal protein L11 methyltransferase.